We begin with the raw amino-acid sequence, 177 residues long: Interleukin-1 receptor antagonist protein (177 aa).

A signal peptide spans 1-25; it reads MEICRGLRSHLITLLLFLFHSETIC. Residues Cys-91 and Cys-141 are joined by a disulfide bond. N-linked (GlcNAc...) asparagine glycosylation occurs at Asn-109.

This sequence belongs to the IL-1 family. As to expression, the intracellular form of IL1RN is predominantly expressed in epithelial cells.

Its subcellular location is the secreted. It localises to the cytoplasm. Functionally, anti-inflammatory antagonist of interleukin-1 family of proinflammatory cytokines such as interleukin-1beta/IL1B and interleukin-1alpha/IL1A. Protects from immune dysregulation and uncontrolled systemic inflammation triggered by IL1 for a range of innate stimulatory agents such as pathogens. The chain is Interleukin-1 receptor antagonist protein (IL1RN) from Homo sapiens (Human).